Reading from the N-terminus, the 455-residue chain is MALWGGRFSQESSALFKLFNDSLPVDFRLIEQDIVGSIAWASAITQVGILTEQECKDLHHALNELLAETIDNPQLIIASGAEDIHSFVEQSLIAKVGDLGKKLHTGRSRNDQVATDLKLWCKKEGEQLLGLLANLRAALIELAERELDAVMPGYTHLQRAQPVVFGHWCLAYVEMFERDISRLQDALKRADTCPLGTGALAGTAYPMDRVKLAKSLGFASPTLNSLDTVSDRDHVIEICSDASISMMHLSRMAEDLIFFNSGEAGFIDLDDEVTSGSSLMPQKKNPDALELIRGKTGRVYGSLMGILTTMKALPLAYNKDMQEDKEGLFDVMDSWSICLEMAALVLSGLKVNREKTLSAAKQGYANSTELADYLVAKGMPFREAHHVVGEAVVSAIAKQTPLEDLTLEELQAFSAVIDADVYDCLTIESCLAKREALGGTSLPQVKSALAVKQAS.

It belongs to the lyase 1 family. Argininosuccinate lyase subfamily.

The protein resides in the cytoplasm. It carries out the reaction 2-(N(omega)-L-arginino)succinate = fumarate + L-arginine. Its pathway is amino-acid biosynthesis; L-arginine biosynthesis; L-arginine from L-ornithine and carbamoyl phosphate: step 3/3. The protein is Argininosuccinate lyase of Shewanella halifaxensis (strain HAW-EB4).